The following is a 123-amino-acid chain: Large ribosomal subunit protein bL20 (123 aa).

Belongs to the bacterial ribosomal protein bL20 family.

Its function is as follows. Binds directly to 23S ribosomal RNA and is necessary for the in vitro assembly process of the 50S ribosomal subunit. It is not involved in the protein synthesizing functions of that subunit. The polypeptide is Large ribosomal subunit protein bL20 (rplT) (Chlamydia trachomatis serovar D (strain ATCC VR-885 / DSM 19411 / UW-3/Cx)).